A 164-amino-acid polypeptide reads, in one-letter code: Cytochrome c-type biogenesis protein CcmE (164 aa).

The Cytoplasmic segment spans residues 1–8 (MNPRRKKR). Residues 9 to 29 (LTLAVALIGGVAAIASLLLYA) form a helical; Signal-anchor for type II membrane protein membrane-spanning segment. The Periplasmic segment spans residues 30–164 (LNSNLNLFFT…EDQSKAGGYK (135 aa)). Heme-binding residues include histidine 131 and tyrosine 135. Residues 140-164 (VAEAMGQSHEKLDYSEDQSKAGGYK) form a disordered region. Residues 147 to 158 (SHEKLDYSEDQS) are compositionally biased toward basic and acidic residues.

Belongs to the CcmE/CycJ family.

It is found in the cell inner membrane. Its function is as follows. Heme chaperone required for the biogenesis of c-type cytochromes. Transiently binds heme delivered by CcmC and transfers the heme to apo-cytochromes in a process facilitated by CcmF and CcmH. The sequence is that of Cytochrome c-type biogenesis protein CcmE from Shewanella piezotolerans (strain WP3 / JCM 13877).